Reading from the N-terminus, the 264-residue chain is Thiazole synthase (264 aa).

K98 serves as the catalytic Schiff-base intermediate with DXP. 1-deoxy-D-xylulose 5-phosphate is bound by residues G159, 185 to 186 (AG), and 207 to 208 (AS). The interval 243–264 (HFAEASSPPEGRAHLDPERPAF) is disordered. A compositionally biased stretch (basic and acidic residues) spans 253 to 264 (GRAHLDPERPAF).

It belongs to the ThiG family. In terms of assembly, homotetramer. Forms heterodimers with either ThiH or ThiS.

The protein localises to the cytoplasm. The catalysed reaction is [ThiS sulfur-carrier protein]-C-terminal-Gly-aminoethanethioate + 2-iminoacetate + 1-deoxy-D-xylulose 5-phosphate = [ThiS sulfur-carrier protein]-C-terminal Gly-Gly + 2-[(2R,5Z)-2-carboxy-4-methylthiazol-5(2H)-ylidene]ethyl phosphate + 2 H2O + H(+). Its pathway is cofactor biosynthesis; thiamine diphosphate biosynthesis. In terms of biological role, catalyzes the rearrangement of 1-deoxy-D-xylulose 5-phosphate (DXP) to produce the thiazole phosphate moiety of thiamine. Sulfur is provided by the thiocarboxylate moiety of the carrier protein ThiS. In vitro, sulfur can be provided by H(2)S. This Streptomyces avermitilis (strain ATCC 31267 / DSM 46492 / JCM 5070 / NBRC 14893 / NCIMB 12804 / NRRL 8165 / MA-4680) protein is Thiazole synthase.